An 891-amino-acid chain; its full sequence is DNA mismatch repair protein MutS (891 aa).

Residue Gly646 to Ser653 participates in ATP binding.

It belongs to the DNA mismatch repair MutS family.

Its function is as follows. This protein is involved in the repair of mismatches in DNA. It is possible that it carries out the mismatch recognition step. This protein has a weak ATPase activity. This chain is DNA mismatch repair protein MutS, found in Rickettsia massiliae (strain Mtu5).